The sequence spans 350 residues: Protein RecA (350 aa).

ATP is bound at residue 66-73; the sequence is GPESSGKT.

It belongs to the RecA family.

The protein resides in the cytoplasm. Can catalyze the hydrolysis of ATP in the presence of single-stranded DNA, the ATP-dependent uptake of single-stranded DNA by duplex DNA, and the ATP-dependent hybridization of homologous single-stranded DNAs. It interacts with LexA causing its activation and leading to its autocatalytic cleavage. The chain is Protein RecA from Dichelobacter nodosus (strain VCS1703A).